The chain runs to 123 residues: UPF0102 protein Fjoh_1217 (123 aa).

It belongs to the UPF0102 family.

This Flavobacterium johnsoniae (strain ATCC 17061 / DSM 2064 / JCM 8514 / BCRC 14874 / CCUG 350202 / NBRC 14942 / NCIMB 11054 / UW101) (Cytophaga johnsonae) protein is UPF0102 protein Fjoh_1217.